The primary structure comprises 309 residues: MRREVVVGTRGSRLALAQADWVIDHLRARYPRVSFVRKEIRTTGDNILEVALAKIGDKGLFTKELEQALLHREIDLAVHSMKDLPTGLPEGLVIGAVSVREYPGDVFISRGGERLEELPAGAVLGTSSLRRTAQLLAYRPDLQVIPVRGNVQTRLRKLDEGVVDALVLAWAGLFRLGLTERVTHRIPVAMCLPAVGQGALGIEARADDAEILEMLRTIDHAPTRAAVQAERTLLRRLEGGCQVPVGALGRFRDGRLVLEAVVASLDGTELVRAQESGPADRPEALGNSLAVRLLEMGAGEILARVRAGA.

Cys-241 bears the S-(dipyrrolylmethanemethyl)cysteine mark.

It belongs to the HMBS family. Monomer. It depends on dipyrromethane as a cofactor.

The catalysed reaction is 4 porphobilinogen + H2O = hydroxymethylbilane + 4 NH4(+). Its pathway is porphyrin-containing compound metabolism; protoporphyrin-IX biosynthesis; coproporphyrinogen-III from 5-aminolevulinate: step 2/4. Its function is as follows. Tetrapolymerization of the monopyrrole PBG into the hydroxymethylbilane pre-uroporphyrinogen in several discrete steps. This is Porphobilinogen deaminase from Desulforudis audaxviator (strain MP104C).